Consider the following 400-residue polypeptide: Elongation factor Tu (400 aa).

In terms of domain architecture, tr-type G spans 10–209; sequence KPHVNIGTIG…AVDKYIPTPQ (200 aa). A G1 region spans residues 19 to 26; the sequence is GHVDHGKT. GTP is bound at residue 19-26; that stretch reads GHVDHGKT. Residue Thr-26 participates in Mg(2+) binding. The G2 stretch occupies residues 60–64; that stretch reads GITIN. Positions 81 to 84 are G3; that stretch reads DCPG. GTP-binding positions include 81-85 and 136-139; these read DCPGH and NKVD. A G4 region spans residues 136–139; it reads NKVD. The interval 174 to 176 is G5; the sequence is SAL.

It belongs to the TRAFAC class translation factor GTPase superfamily. Classic translation factor GTPase family. EF-Tu/EF-1A subfamily. In terms of assembly, monomer.

Its subcellular location is the cytoplasm. It catalyses the reaction GTP + H2O = GDP + phosphate + H(+). Its function is as follows. GTP hydrolase that promotes the GTP-dependent binding of aminoacyl-tRNA to the A-site of ribosomes during protein biosynthesis. In Caldicellulosiruptor bescii (strain ATCC BAA-1888 / DSM 6725 / KCTC 15123 / Z-1320) (Anaerocellum thermophilum), this protein is Elongation factor Tu.